The following is a 353-amino-acid chain: Photosystem II D2 protein (353 aa).

Thr-2 is subject to N-acetylthreonine. The residue at position 2 (Thr-2) is a Phosphothreonine. A helical transmembrane segment spans residues 41-61 (CAYFAVGGWFTGTTFVTSWYT). Position 118 (His-118) interacts with chlorophyll a. Residues 125–141 (GFMLRQFELARSVQLRP) traverse the membrane as a helical segment. Pheophytin a-binding residues include Gln-130 and Asn-143. The chain crosses the membrane as a helical span at residues 153–166 (VFVSVFLIYPLGQS). His-198 lines the chlorophyll a pocket. Residues 208-228 (AALLCAIHGATVENTLFEDGD) form a helical membrane-spanning segment. Positions 215 and 262 each coordinate a plastoquinone. His-215 is a Fe cation binding site. Position 269 (His-269) interacts with Fe cation. Residues 279–295 (GLWMSALGVVGLALNLR) form a helical membrane-spanning segment.

Belongs to the reaction center PufL/M/PsbA/D family. As to quaternary structure, PSII is composed of 1 copy each of membrane proteins PsbA, PsbB, PsbC, PsbD, PsbE, PsbF, PsbH, PsbI, PsbJ, PsbK, PsbL, PsbM, PsbT, PsbX, PsbY, PsbZ, Psb30/Ycf12, at least 3 peripheral proteins of the oxygen-evolving complex and a large number of cofactors. It forms dimeric complexes. It depends on The D1/D2 heterodimer binds P680, chlorophylls that are the primary electron donor of PSII, and subsequent electron acceptors. It shares a non-heme iron and each subunit binds pheophytin, quinone, additional chlorophylls, carotenoids and lipids. There is also a Cl(-1) ion associated with D1 and D2, which is required for oxygen evolution. The PSII complex binds additional chlorophylls, carotenoids and specific lipids. as a cofactor.

The protein localises to the plastid. It is found in the chloroplast thylakoid membrane. The catalysed reaction is 2 a plastoquinone + 4 hnu + 2 H2O = 2 a plastoquinol + O2. In terms of biological role, photosystem II (PSII) is a light-driven water:plastoquinone oxidoreductase that uses light energy to abstract electrons from H(2)O, generating O(2) and a proton gradient subsequently used for ATP formation. It consists of a core antenna complex that captures photons, and an electron transfer chain that converts photonic excitation into a charge separation. The D1/D2 (PsbA/PsbD) reaction center heterodimer binds P680, the primary electron donor of PSII as well as several subsequent electron acceptors. D2 is needed for assembly of a stable PSII complex. This Jasminum nudiflorum (Winter jasmine) protein is Photosystem II D2 protein.